The primary structure comprises 451 residues: Phosphoglucosamine mutase (451 aa).

Residue Ser107 is the Phosphoserine intermediate of the active site. Residues Ser107, Asp246, Asp248, and Asp250 each coordinate Mg(2+). Ser107 is modified (phosphoserine).

The protein belongs to the phosphohexose mutase family. It depends on Mg(2+) as a cofactor. Activated by phosphorylation.

The catalysed reaction is alpha-D-glucosamine 1-phosphate = D-glucosamine 6-phosphate. Catalyzes the conversion of glucosamine-6-phosphate to glucosamine-1-phosphate. In Burkholderia vietnamiensis (strain G4 / LMG 22486) (Burkholderia cepacia (strain R1808)), this protein is Phosphoglucosamine mutase.